A 218-amino-acid chain; its full sequence is MANSSPVYDWFQERLEIQDIADDVTSKYVPPHVNIFYCLGGITLVCFLIQFATGFAMTFYYKPTVTEAYSSVSYLMTDVSFGWLIRSVHRWSASMMVLMLILHVFRVYLTGGFKRPRELTWITGVVMAVITVAFGVTGYSLPWDQVGYWAVKIVSGVPAAIPVIGDFMVELLRGGESVGQSTLTRFYSLHTFVMPWLLAVFMLMHFLMIRKQGISGPL.

A helical membrane pass occupies residues 35–55; sequence IFYCLGGITLVCFLIQFATGF. Cysteine 38 contributes to the heme c binding site. The heme b site is built by histidine 89 and histidine 103. Helical transmembrane passes span 93–113, 119–139, and 189–209; these read ASMM…TGGF, LTWI…VTGY, and LHTF…FLMI. Heme b-binding residues include histidine 190 and histidine 205.

The protein belongs to the cytochrome b family. PetB subfamily. The 4 large subunits of the cytochrome b6-f complex are cytochrome b6, subunit IV (17 kDa polypeptide, PetD), cytochrome f and the Rieske protein, while the 4 small subunits are PetG, PetL, PetM and PetN. The complex functions as a dimer. It depends on heme b as a cofactor. The cofactor is heme c.

The protein resides in the cellular thylakoid membrane. Component of the cytochrome b6-f complex, which mediates electron transfer between photosystem II (PSII) and photosystem I (PSI), cyclic electron flow around PSI, and state transitions. This Prochlorococcus marinus (strain NATL1A) protein is Cytochrome b6.